We begin with the raw amino-acid sequence, 219 residues long: Elongation factor Ts (219 aa).

The segment at 82–85 (TDFV) is involved in Mg(2+) ion dislocation from EF-Tu.

The protein belongs to the EF-Ts family.

The protein resides in the cytoplasm. Functionally, associates with the EF-Tu.GDP complex and induces the exchange of GDP to GTP. It remains bound to the aminoacyl-tRNA.EF-Tu.GTP complex up to the GTP hydrolysis stage on the ribosome. The polypeptide is Elongation factor Ts (Anaeromyxobacter sp. (strain Fw109-5)).